Reading from the N-terminus, the 561-residue chain is Hemolysin transporter protein HpmB (561 aa).

The N-terminal stretch at 1-17 is a signal peptide; that stretch reads MKKKVVLLTLLSCFSTS. One can recognise a POTRA domain in the interval 77 to 150; the sequence is LPIKGVYIQG…GELGLYAIEG (74 aa).

It belongs to the TPS (TC 1.B.20) family.

Its subcellular location is the cell outer membrane. In terms of biological role, interacts with the cell-bound hemolysin. Necessary for the extracellular secretion and activation of the hemolysin. Probable member of a two partner secretion pathway (TPS) in which it mediates the secretion of hemolysin. The chain is Hemolysin transporter protein HpmB (hpmB) from Proteus mirabilis.